A 397-amino-acid chain; its full sequence is 2-oxoglutarate and iron-dependent oxygenase domain-containing protein ICU11 (397 aa).

The disordered stretch occupies residues methionine 1 to leucine 56. Over residues glutamine 18 to proline 27 the composition is skewed to low complexity. The Fe2OG dioxygenase domain occupies serine 238–serine 339. Residues histidine 260, aspartate 262, and histidine 320 each coordinate Fe cation. Arginine 330 is a binding site for 2-oxoglutarate.

Requires Fe(2+) as cofactor. L-ascorbate is required as a cofactor. Expressed in roots, cotyledons, rosette leaves, cauline leaves and inflorescences.

The protein resides in the nucleus. Its subcellular location is the nucleoplasm. Functionally, participates in the epigenetic repression of flowering genes in association with CP2. Functions in the repression of several members of the MADS-box transcription factors family, including SEP3, during vegetative development via histone modification. The sequence is that of 2-oxoglutarate and iron-dependent oxygenase domain-containing protein ICU11 from Arabidopsis thaliana (Mouse-ear cress).